Here is a 128-residue protein sequence, read N- to C-terminus: Small ribosomal subunit protein uS8c (128 aa).

Belongs to the universal ribosomal protein uS8 family. As to quaternary structure, part of the 30S ribosomal subunit.

Its subcellular location is the plastid. The protein resides in the chloroplast. One of the primary rRNA binding proteins, it binds directly to 16S rRNA central domain where it helps coordinate assembly of the platform of the 30S subunit. This is Small ribosomal subunit protein uS8c (rps8) from Welwitschia mirabilis (Tree tumbo).